A 354-amino-acid chain; its full sequence is Chaperone protein dnaJ 49 (354 aa).

The J domain occupies 99-163; the sequence is DYYAILGLEK…NSRRQFDQVG (65 aa). The helical transmembrane segment at 237 to 257 threads the bilayer; the sequence is CLTIIQILPFFLLLLLAYLPF.

Belongs to the DnaJ family. C/III subfamily.

Its subcellular location is the membrane. Plays a continuous role in plant development probably in the structural organization of compartments. In Arabidopsis thaliana (Mouse-ear cress), this protein is Chaperone protein dnaJ 49 (ATJ49).